The primary structure comprises 181 residues: Oligoribonuclease (181 aa).

In terms of domain architecture, Exonuclease spans L8–L171. Residue Y129 is part of the active site.

Belongs to the oligoribonuclease family.

It localises to the cytoplasm. Functionally, 3'-to-5' exoribonuclease specific for small oligoribonucleotides. This is Oligoribonuclease from Vibrio campbellii (strain ATCC BAA-1116).